We begin with the raw amino-acid sequence, 255 residues long: Geranylgeranylglyceryl phosphate synthase (255 aa).

Mg(2+) is bound by residues aspartate 25 and serine 54. Sn-glycerol 1-phosphate-binding positions include 173–179, 203–204, and 225–226; these read YLEGGSG, GG, and GT.

It belongs to the GGGP/HepGP synthase family. Group II subfamily. The cofactor is Mg(2+).

The protein resides in the cytoplasm. It carries out the reaction sn-glycerol 1-phosphate + (2E,6E,10E)-geranylgeranyl diphosphate = sn-3-O-(geranylgeranyl)glycerol 1-phosphate + diphosphate. It functions in the pathway membrane lipid metabolism; glycerophospholipid metabolism. In terms of biological role, prenyltransferase that catalyzes the transfer of the geranylgeranyl moiety of geranylgeranyl diphosphate (GGPP) to the C3 hydroxyl of sn-glycerol-1-phosphate (G1P). This reaction is the first ether-bond-formation step in the biosynthesis of archaeal membrane lipids. This chain is Geranylgeranylglyceryl phosphate synthase, found in Thermofilum pendens (strain DSM 2475 / Hrk 5).